We begin with the raw amino-acid sequence, 216 residues long: Putative transmembrane protein RNF32-DT (216 aa).

A helical membrane pass occupies residues 177–197 (WIPLLLVAGCVSCFVGLAVCV).

As to expression, expressed only in testis.

Its subcellular location is the cytoplasm. The protein resides in the membrane. The protein is Putative transmembrane protein RNF32-DT of Homo sapiens (Human).